The primary structure comprises 327 residues: GTP 3',8-cyclase (327 aa).

In terms of domain architecture, Radical SAM core spans 7-232; it reads HHDRQFRYLR…IKRDRTAGPA (226 aa). R16 contributes to the GTP binding site. C23 and C27 together coordinate [4Fe-4S] cluster. Residue Y29 coordinates S-adenosyl-L-methionine. C30 contacts [4Fe-4S] cluster. R66 serves as a coordination point for GTP. Residue G70 coordinates S-adenosyl-L-methionine. Residue T97 coordinates GTP. Residue S121 coordinates S-adenosyl-L-methionine. A GTP-binding site is contributed by K158. M192 lines the S-adenosyl-L-methionine pocket. [4Fe-4S] cluster-binding residues include C255 and C258. 260-262 provides a ligand contact to GTP; the sequence is RLR. C272 contributes to the [4Fe-4S] cluster binding site.

This sequence belongs to the radical SAM superfamily. MoaA family. As to quaternary structure, monomer and homodimer. It depends on [4Fe-4S] cluster as a cofactor.

It catalyses the reaction GTP + AH2 + S-adenosyl-L-methionine = (8S)-3',8-cyclo-7,8-dihydroguanosine 5'-triphosphate + 5'-deoxyadenosine + L-methionine + A + H(+). The protein operates within cofactor biosynthesis; molybdopterin biosynthesis. In terms of biological role, catalyzes the cyclization of GTP to (8S)-3',8-cyclo-7,8-dihydroguanosine 5'-triphosphate. This is GTP 3',8-cyclase from Synechococcus elongatus (strain ATCC 33912 / PCC 7942 / FACHB-805) (Anacystis nidulans R2).